Reading from the N-terminus, the 259-residue chain is L-cysteine S-thiosulfotransferase subunit SoxA (259 aa).

The first 23 residues, 1–23 (MRKLWFLPILLGAVGGVSLYAIA), serve as a signal peptide directing secretion. The Cytochrome c domain occupies 50–135 (VYAEQGRDMF…SIATYVATLS (86 aa)). Residues Cys70, Cys73, His74, Cys108, Cys171, Cys174, and His175 each contribute to the heme c site. Arg216 is a substrate binding site. Heme c is bound at residue Cys220. Catalysis depends on Cys220, which acts as the Cysteine persulfide intermediate.

This sequence belongs to the SoxA family. Heterodimer of SoxA and SoxX. Heme c serves as cofactor. Cysteine persulfide at Cys-220.

It localises to the periplasm. It carries out the reaction L-cysteinyl-[SoxY protein] + thiosulfate + 2 Fe(III)-[cytochrome c] = S-sulfosulfanyl-L-cysteinyl-[SoxY protein] + 2 Fe(II)-[cytochrome c] + 2 H(+). It catalyses the reaction S-sulfanyl-L-cysteinyl-[SoxY protein] + thiosulfate + 2 Fe(III)-[cytochrome c] = S-(2-sulfodisulfanyl)-L-cysteinyl-[SoxY protein] + 2 Fe(II)-[cytochrome c] + 2 H(+). Functionally, C-type diheme cytochrome, which is part of the SoxAX cytochrome complex involved in sulfur oxidation. The SoxAX complex catalyzes the formation of a heterodisulfide bond between the conserved cysteine residue on a sulfur carrier SoxYZ complex subunit SoxY and thiosulfate or other inorganic sulfur substrates. This leads to the liberation of two electrons, which may be transferred from the SoxAX complex to another cytochrome c that then channels them into the respiratory electron transport chain. Some electrons may be used for reductive CO(2) fixation. This is L-cysteine S-thiosulfotransferase subunit SoxA from Hydrogenobacter thermophilus (strain DSM 6534 / IAM 12695 / TK-6).